The sequence spans 240 residues: Sugar fermentation stimulation protein homolog (240 aa).

This sequence belongs to the SfsA family.

This is Sugar fermentation stimulation protein homolog from Saccharolobus islandicus (strain L.S.2.15 / Lassen #1) (Sulfolobus islandicus).